A 393-amino-acid polypeptide reads, in one-letter code: Succinate--CoA ligase [ADP-forming] subunit beta (393 aa).

Residues 9–251 (KALFEKFGVL…LNEEDPKEIE (243 aa)) enclose the ATP-grasp domain. Residues lysine 46, 53–55 (GRG), serine 109, and glutamate 114 each bind ATP. The Mg(2+) site is built by asparagine 206 and aspartate 220. Substrate-binding positions include asparagine 271 and 328–330 (GIM).

This sequence belongs to the succinate/malate CoA ligase beta subunit family. Heterotetramer of two alpha and two beta subunits. The cofactor is Mg(2+).

It catalyses the reaction succinate + ATP + CoA = succinyl-CoA + ADP + phosphate. The enzyme catalyses GTP + succinate + CoA = succinyl-CoA + GDP + phosphate. It functions in the pathway carbohydrate metabolism; tricarboxylic acid cycle; succinate from succinyl-CoA (ligase route): step 1/1. Succinyl-CoA synthetase functions in the citric acid cycle (TCA), coupling the hydrolysis of succinyl-CoA to the synthesis of either ATP or GTP and thus represents the only step of substrate-level phosphorylation in the TCA. The beta subunit provides nucleotide specificity of the enzyme and binds the substrate succinate, while the binding sites for coenzyme A and phosphate are found in the alpha subunit. The protein is Succinate--CoA ligase [ADP-forming] subunit beta of Opitutus terrae (strain DSM 11246 / JCM 15787 / PB90-1).